The primary structure comprises 694 residues: Acetyl-coenzyme A synthetase (694 aa).

The tract at residues 1 to 23 is disordered; sequence MSDKRPRSPCSNNNDELNDSSVL. The span at 9-23 shows a compositional bias: polar residues; the sequence is PCSNNNDELNDSSVL. CoA-binding positions include 229–232 and threonine 347; that span reads RGKK. ATP contacts are provided by residues 423-425, 447-452, aspartate 536, and arginine 551; these read GEP and DTYWQT. Position 559 (serine 559) interacts with CoA. Arginine 562 is an ATP binding site. Arginine 628 is a binding site for CoA.

The protein belongs to the ATP-dependent AMP-binding enzyme family.

The catalysed reaction is acetate + ATP + CoA = acetyl-CoA + AMP + diphosphate. This chain is Acetyl-coenzyme A synthetase (ACS), found in Cryptosporidium parvum.